Reading from the N-terminus, the 400-residue chain is Golgin-45 (400 aa).

Positions 1 to 16 (MTTKNLETKVTVTSSP) are enriched in polar residues. The disordered stretch occupies residues 1-58 (MTTKNLETKVTVTSSPIRGAGDGMETEEPPKSVEVTSGVQSRKHHSLQSPWKKAVPSE). Ser-15 is modified (phosphoserine). A Tankyrase-binding motif motif is present at residues 18 to 22 (RGAGD). Phosphoserine is present on Ser-49. A coiled-coil region spans residues 120–213 (NKELSEVKNV…QLERMSIQCD (94 aa)). Thr-348 is subject to Phosphothreonine. Position 353 is a phosphoserine (Ser-353). Positions 394 to 400 (RGELIAL) are essential for interaction with GORASP2.

In terms of assembly, interacts with GORASP2. Interacts with the GTP-bound form of RAB2, but not with other Golgi Rab proteins. Identified in a complex with RAB2 and GORASP2. In terms of processing, ADP-ribosylated by tankyrase TNKS and TNKS2. Poly-ADP-ribosylated protein is recognized by RNF146, followed by ubiquitination. Ubiquitinated by RNF146 when poly-ADP-ribosylated, leading to its degradation. In terms of tissue distribution, detected in adrenal gland.

Its subcellular location is the golgi apparatus membrane. The protein resides in the nucleus. It localises to the cytoplasm. Functionally, required for normal Golgi structure and for protein transport from the endoplasmic reticulum (ER) through the Golgi apparatus to the cell surface. This Homo sapiens (Human) protein is Golgin-45 (BLZF1).